Here is a 147-residue protein sequence, read N- to C-terminus: MAKEIVRKAKLQFPAGQAKPGPALAGVGINMPEFTKAFNDQTRDRGQEPVPVLITVYKDKSFEFKLFTSPTAYKLTQIAKIKKGSSKANKEKVATITLDQLKEIAEYKLPDLNTNNIDSAMRQIAGTAKQMGIEIEGYAEWLKKGTN.

The protein belongs to the universal ribosomal protein uL11 family. In terms of assembly, part of the ribosomal stalk of the 50S ribosomal subunit. Interacts with L10 and the large rRNA to form the base of the stalk. L10 forms an elongated spine to which L12 dimers bind in a sequential fashion forming a multimeric L10(L12)X complex. Post-translationally, one or more lysine residues are methylated.

In terms of biological role, forms part of the ribosomal stalk which helps the ribosome interact with GTP-bound translation factors. This Metamycoplasma arthritidis (strain 158L3-1) (Mycoplasma arthritidis) protein is Large ribosomal subunit protein uL11.